The following is a 100-amino-acid chain: Urease subunit gamma (100 aa).

This sequence belongs to the urease gamma subunit family. As to quaternary structure, heterotrimer of UreA (gamma), UreB (beta) and UreC (alpha) subunits. Three heterotrimers associate to form the active enzyme.

Its subcellular location is the cytoplasm. The enzyme catalyses urea + 2 H2O + H(+) = hydrogencarbonate + 2 NH4(+). Its pathway is nitrogen metabolism; urea degradation; CO(2) and NH(3) from urea (urease route): step 1/1. This chain is Urease subunit gamma, found in Rhodopseudomonas palustris (strain BisA53).